A 143-amino-acid polypeptide reads, in one-letter code: Large ribosomal subunit protein uL11 (143 aa).

This sequence belongs to the universal ribosomal protein uL11 family. In terms of assembly, part of the ribosomal stalk of the 50S ribosomal subunit. Interacts with L10 and the large rRNA to form the base of the stalk. L10 forms an elongated spine to which L12 dimers bind in a sequential fashion forming a multimeric L10(L12)X complex. One or more lysine residues are methylated.

Its function is as follows. Forms part of the ribosomal stalk which helps the ribosome interact with GTP-bound translation factors. The sequence is that of Large ribosomal subunit protein uL11 from Ectopseudomonas mendocina (strain ymp) (Pseudomonas mendocina).